The primary structure comprises 668 residues: Exoribonuclease 2 (668 aa).

An RNB domain is found at 193-521 (RIEMTHVPFV…INHRMLKAVI (329 aa)). Residues 568 to 650 (QTCFTGEIFD…ENRSLVAKPT (83 aa)) form the S1 motif domain.

Belongs to the RNR ribonuclease family. RNase II subfamily.

The protein localises to the cytoplasm. It catalyses the reaction Exonucleolytic cleavage in the 3'- to 5'-direction to yield nucleoside 5'-phosphates.. Involved in mRNA degradation. Hydrolyzes single-stranded polyribonucleotides processively in the 3' to 5' direction. The protein is Exoribonuclease 2 of Vibrio parahaemolyticus serotype O3:K6 (strain RIMD 2210633).